A 500-amino-acid polypeptide reads, in one-letter code: L-arabinose isomerase (500 aa).

4 residues coordinate Mn(2+): glutamate 306, glutamate 333, histidine 349, and histidine 448.

Belongs to the arabinose isomerase family. Requires Mn(2+) as cofactor.

The enzyme catalyses beta-L-arabinopyranose = L-ribulose. The protein operates within carbohydrate degradation; L-arabinose degradation via L-ribulose; D-xylulose 5-phosphate from L-arabinose (bacterial route): step 1/3. Catalyzes the conversion of L-arabinose to L-ribulose. This chain is L-arabinose isomerase, found in Saccharophagus degradans (strain 2-40 / ATCC 43961 / DSM 17024).